Consider the following 338-residue polypeptide: Activator of 90 kDa heat shock protein ATPase homolog 1 (338 aa).

The residue at position 3 (Lys3) is an N6-acetyllysine. Lys182 participates in a covalent cross-link: Glycyl lysine isopeptide (Lys-Gly) (interchain with G-Cter in SUMO1). Phosphoserine is present on Ser193. Lys203 is covalently cross-linked (Glycyl lysine isopeptide (Lys-Gly) (interchain with G-Cter in SUMO2)). Lys212 carries the N6-acetyllysine modification. Tyr223 carries the phosphotyrosine; by ABL modification. Ser258 bears the Phosphoserine mark.

The protein belongs to the AHA1 family. As to quaternary structure, interacts with HSPCA/HSP90. Interacts (phosphorylated on Tyr-223) with HSP90AA1; the interaction activates HSP90AA1 ATPase activity. Interacts with HSP90AB1. Interacts with GCH1. Interacts with SRPK1. Interacts with FLCN. (Microbial infection) Interacts with vesicular stomatitis virus glycoprotein (VSV G) (via cytoplasmic tail). Phosphorylation at Tyr-223 enhances binding to chaperone HSP90AA1. As to expression, expressed in numerous tissues, including brain, heart, skeletal muscle and kidney and, at lower levels, liver and placenta.

The protein resides in the cytoplasm. The protein localises to the cytosol. Its subcellular location is the endoplasmic reticulum. Its function is as follows. Acts as a co-chaperone of HSP90AA1. Activates the ATPase activity of HSP90AA1 leading to increase in its chaperone activity. Competes with the inhibitory co-chaperone FNIP1 for binding to HSP90AA1, thereby providing a reciprocal regulatory mechanism for chaperoning of client proteins. Competes with the inhibitory co-chaperone TSC1 for binding to HSP90AA1, thereby providing a reciprocal regulatory mechanism for chaperoning of client proteins. The chain is Activator of 90 kDa heat shock protein ATPase homolog 1 (AHSA1) from Homo sapiens (Human).